Here is a 69-residue protein sequence, read N- to C-terminus: Putative membrane protein insertion efficiency factor (69 aa).

The protein belongs to the UPF0161 family.

It localises to the cell inner membrane. In terms of biological role, could be involved in insertion of integral membrane proteins into the membrane. In Magnetococcus marinus (strain ATCC BAA-1437 / JCM 17883 / MC-1), this protein is Putative membrane protein insertion efficiency factor.